A 71-amino-acid polypeptide reads, in one-letter code: Putative membrane protein insertion efficiency factor (71 aa).

It belongs to the UPF0161 family.

The protein localises to the cell inner membrane. Could be involved in insertion of integral membrane proteins into the membrane. This chain is Putative membrane protein insertion efficiency factor, found in Nitrosospira multiformis (strain ATCC 25196 / NCIMB 11849 / C 71).